A 396-amino-acid polypeptide reads, in one-letter code: Phosphoglycerate kinase (396 aa).

Substrate contacts are provided by residues Asp-21 to Asn-23, Arg-36, His-59 to Lys-62, Arg-119, and Arg-156. Residues Lys-206, Gly-294, Glu-325, and Gly-352–Ser-355 each bind ATP.

Belongs to the phosphoglycerate kinase family. Monomer.

It localises to the cytoplasm. The catalysed reaction is (2R)-3-phosphoglycerate + ATP = (2R)-3-phospho-glyceroyl phosphate + ADP. The protein operates within carbohydrate degradation; glycolysis; pyruvate from D-glyceraldehyde 3-phosphate: step 2/5. The polypeptide is Phosphoglycerate kinase (Listeria monocytogenes serovar 1/2a (strain ATCC BAA-679 / EGD-e)).